A 721-amino-acid chain; its full sequence is BBSome complex member bbs-7 (721 aa).

In terms of assembly, part of BBSome complex, that contains at least bbs-1, bbs-2, bbs-4, bbs-5, osm-12, bbs-8/ttc-8 and bbs-9. Interacts with bbs-1. In terms of tissue distribution, expressed in ciliated cells including amphid and both inner and outer labial neurons of the head and in both phasmid neurons PHA and PHB in the tail at larval stages L1 and L2.

It is found in the cell projection. Its subcellular location is the cilium. The protein localises to the cytoplasm. The protein resides in the cytoskeleton. It localises to the cilium basal body. It is found in the cilium axoneme. Its function is as follows. Component of the BBSome complex. The BBSome complex is thought to function as a coat complex required for sorting of specific membrane proteins to the primary cilia. The BBSome complex is required for ciliogenesis but is dispensable for centriolar satellite function. Required for proper BBSome complex assembly and its ciliary localization. Required for cilia biogenesis and both the assembly and movement of intraflagellar transport proteins along the ciliary axoneme. Plays a role in the removal of degraded mechanosensory receptors within the cilia. Plays a role in guanylyl cyclase localization in the ring-like structures at the base of the finger compartment in AFD sensory neurons. In ciliated sensory neurons, required for the sensation of nitric oxide and avoidance of NO-producing organisms like P.aeruginosa. In Caenorhabditis elegans, this protein is BBSome complex member bbs-7.